The sequence spans 551 residues: Calcium-dependent protein kinase 13 (551 aa).

Glycine 2 carries the N-myristoyl glycine lipid modification. Residues 15 to 78 form a disordered region; the sequence is SFKQTASQRH…APADLGSVLG (64 aa). The 259-residue stretch at 88 to 346 folds into the Protein kinase domain; sequence YAMGRKLGQG…AHEVLCHPWI (259 aa). Residues 94–102 and lysine 117 each bind ATP; that span reads LGQGQFGTT. Aspartate 212 acts as the Proton acceptor in catalysis. Positions 352-382 are autoinhibitory domain; it reads APDRPLDPAVLSRIKQFSAMNKLKKMALRVI. EF-hand domains lie at 389-424, 425-460, 461-496, and 497-530; these read EEIA…YGST, LKDT…LNKL, EREE…HNMP, and DAFL…GNMG. Positions 402, 404, 406, 413, 438, 440, 442, 444, 449, 474, 476, 478, 480, 485, 508, 510, 512, 514, and 519 each coordinate Ca(2+).

This sequence belongs to the protein kinase superfamily. Ser/Thr protein kinase family. CDPK subfamily. In terms of tissue distribution, expressed in vascular tissues of crowns and roots, vascular bundles and central cylinder. Expressed in roots, leaf blades, spikelets and developing seeds.

It is found in the membrane. It catalyses the reaction L-seryl-[protein] + ATP = O-phospho-L-seryl-[protein] + ADP + H(+). It carries out the reaction L-threonyl-[protein] + ATP = O-phospho-L-threonyl-[protein] + ADP + H(+). Activated by calcium. Autophosphorylation may play an important role in the regulation of the kinase activity. May play a role in signal transduction pathways that involve calcium as a second messenger. May function in signal transduction pathways that positively regulate responses to cold, salt and drought stresses. This chain is Calcium-dependent protein kinase 13, found in Oryza sativa subsp. japonica (Rice).